The primary structure comprises 351 residues: E3 ubiquitin-protein ligase TRIM63 (351 aa).

The segment at 23 to 79 (CPICLEMFTKPVVILPCQHNLCRKCANDIFQAANPYWTNRGGSVSMSGGRFRCPSCR) adopts an RING-type zinc-finger fold. The tract at residues 74–218 (RCPSCRHEVI…LSHKFDALYA (145 aa)) is interaction with TTN. Residues 117-159 (GSHPMCKEHEDEKINIYCLTCEVPTCSLCKVFGAHQACEVAPL) form a B box-type zinc finger. Zn(2+)-binding residues include Cys-122, His-125, Cys-145, and His-151. The stretch at 189–269 (SQLEDSCRVT…VETAIQSLDE (81 aa)) forms a coiled coil. Residues 267 to 325 (LDEPGGATFLLSAKPLIKSIVEASKGCQLGKTEQGFENMDYFTLNLEHIAEALRAIDFG) form the COS domain. Residues 326 to 345 (TDEEEEFTEEEEEEDQEEGV) are compositionally biased toward acidic residues. A disordered region spans residues 326–351 (TDEEEEFTEEEEEEDQEEGVSTEGHQ).

In terms of assembly, homodimer. Homooligomer and heterooligomer. Interacts with SUMO2, titin/TTN and GMEB1. Interacts with TRIM54 and probably with TRIM55 and TNNI3. Forms a ternary complex with RACK1 and PRKCE. Interacts with CKM. As to expression, muscle specific. Selectively expressed in heart and skeletal muscle.

Its subcellular location is the cytoplasm. It localises to the nucleus. It is found in the myofibril. The protein localises to the sarcomere. The protein resides in the m line. Its subcellular location is the z line. The catalysed reaction is S-ubiquitinyl-[E2 ubiquitin-conjugating enzyme]-L-cysteine + [acceptor protein]-L-lysine = [E2 ubiquitin-conjugating enzyme]-L-cysteine + N(6)-ubiquitinyl-[acceptor protein]-L-lysine.. It participates in protein modification; protein ubiquitination. In terms of biological role, E3 ubiquitin ligase. Mediates the ubiquitination and subsequent proteasomal degradation of CKM, GMEB1 and HIBADH. Regulates the proteasomal degradation of muscle proteins under amino acid starvation, where muscle protein is catabolized to provide other organs with amino acids. Inhibits de novo skeletal muscle protein synthesis under amino acid starvation. Regulates proteasomal degradation of cardiac troponin I/TNNI3 and probably of other sarcomeric-associated proteins. May play a role in striated muscle atrophy and hypertrophy by regulating an anti-hypertrophic PKC-mediated signaling pathway. May regulate the organization of myofibrils through TTN in muscle cells. The sequence is that of E3 ubiquitin-protein ligase TRIM63 (Trim63) from Rattus norvegicus (Rat).